Here is a 293-residue protein sequence, read N- to C-terminus: 4-hydroxy-tetrahydrodipicolinate synthase (293 aa).

T44 serves as a coordination point for pyruvate. Y132 functions as the Proton donor/acceptor in the catalytic mechanism. K161 serves as the catalytic Schiff-base intermediate with substrate. I203 is a binding site for pyruvate.

It belongs to the DapA family. In terms of assembly, homotetramer; dimer of dimers.

It is found in the cytoplasm. It carries out the reaction L-aspartate 4-semialdehyde + pyruvate = (2S,4S)-4-hydroxy-2,3,4,5-tetrahydrodipicolinate + H2O + H(+). Its pathway is amino-acid biosynthesis; L-lysine biosynthesis via DAP pathway; (S)-tetrahydrodipicolinate from L-aspartate: step 3/4. Catalyzes the condensation of (S)-aspartate-beta-semialdehyde [(S)-ASA] and pyruvate to 4-hydroxy-tetrahydrodipicolinate (HTPA). The sequence is that of 4-hydroxy-tetrahydrodipicolinate synthase from Sulfurihydrogenibium sp. (strain YO3AOP1).